The chain runs to 294 residues: MAAITAAMVGELRAKTDAPMMECKKALTEADGDMARAEEILRVKLGSKAGKAASRVTAEGIVATAINGSTGALLEVNCETDFVSKNDDFLAFVNDCVKLVAEKNPADVAALLALPLNGQTVDEVRSALIGKIGENIMPRRFKRFTGSNKLVSYLHGTRIGVMVEFEGDDTAAKDVAMHIAAMKPVALSMADVPAESIAIERSVAVQKAAESGKPPEIVEKMVEGSIQKYLKEVSLLNQTFVKNDKQTVEQMLKAANTTIKGFTMYVVGEGIEKRQDDFAAEVAAQVAAASKATA.

The segment at 80–83 is involved in Mg(2+) ion dislocation from EF-Tu; that stretch reads TDFV.

The protein belongs to the EF-Ts family.

Its subcellular location is the cytoplasm. In terms of biological role, associates with the EF-Tu.GDP complex and induces the exchange of GDP to GTP. It remains bound to the aminoacyl-tRNA.EF-Tu.GTP complex up to the GTP hydrolysis stage on the ribosome. The chain is Elongation factor Ts from Polynucleobacter asymbioticus (strain DSM 18221 / CIP 109841 / QLW-P1DMWA-1) (Polynucleobacter necessarius subsp. asymbioticus).